A 419-amino-acid polypeptide reads, in one-letter code: Zinc finger protein Pegasus (419 aa).

A Glycyl lysine isopeptide (Lys-Gly) (interchain with G-Cter in SUMO2) cross-link involves residue Lys-5. 3 consecutive C2H2-type zinc fingers follow at residues 82-104 (LKCR…IRIH), 110-132 (HRCH…MRSH), and 138-161 (YKCE…RRKH). Residue Lys-185 forms a Glycyl lysine isopeptide (Lys-Gly) (interchain with G-Cter in SUMO2) linkage. Residues 223-236 (QTDSYESMAKTTPT) show a composition bias toward polar residues. Disordered regions lie at residues 223–245 (QTDS…DPQE) and 288–356 (MQQP…PTLP). Low complexity predominate over residues 289–311 (QQPSAQAVVSAVSASLPQSSSPA). The segment covering 332 to 349 (SEPSAHTSTPSMGNSQPS) has biased composition (polar residues). C2H2-type zinc fingers lie at residues 364–386 (HHCQ…MGCH) and 392–416 (FQCN…RGQH).

The protein belongs to the Ikaros C2H2-type zinc-finger protein family. As to quaternary structure, self-associates. Interacts with other family members; IKZF1, IKZF2, IKZF3 and IKZF4.

It is found in the nucleus. In terms of biological role, transcriptional repressor that binds the core 5'GNNTGTNG-3' DNA consensus sequence. Involved in megakaryocyte differentiation. The sequence is that of Zinc finger protein Pegasus (IKZF5) from Bos taurus (Bovine).